Here is a 306-residue protein sequence, read N- to C-terminus: Aspartate carbamoyltransferase catalytic subunit (306 aa).

The carbamoyl phosphate site is built by R56 and T57. K84 contacts L-aspartate. Carbamoyl phosphate contacts are provided by R106, H134, and Q137. Residues R167 and R221 each contribute to the L-aspartate site. Carbamoyl phosphate-binding residues include G262 and P263.

This sequence belongs to the aspartate/ornithine carbamoyltransferase superfamily. ATCase family. As to quaternary structure, heterododecamer (2C3:3R2) of six catalytic PyrB chains organized as two trimers (C3), and six regulatory PyrI chains organized as three dimers (R2).

The enzyme catalyses carbamoyl phosphate + L-aspartate = N-carbamoyl-L-aspartate + phosphate + H(+). It functions in the pathway pyrimidine metabolism; UMP biosynthesis via de novo pathway; (S)-dihydroorotate from bicarbonate: step 2/3. Catalyzes the condensation of carbamoyl phosphate and aspartate to form carbamoyl aspartate and inorganic phosphate, the committed step in the de novo pyrimidine nucleotide biosynthesis pathway. The polypeptide is Aspartate carbamoyltransferase catalytic subunit (Desulforudis audaxviator (strain MP104C)).